The chain runs to 537 residues: CTP synthase (537 aa).

The segment at 1–265 is amidoligase domain; that stretch reads MTKFIFVTGG…GKYLVKRLGL (265 aa). Ser-13 lines the CTP pocket. Residue Ser-13 coordinates UTP. 14-19 contributes to the ATP binding site; that stretch reads GLGKGI. Residue Tyr-54 coordinates L-glutamine. Asp-71 lines the ATP pocket. Mg(2+)-binding residues include Asp-71 and Glu-139. Residues 146-148, 186-191, and Lys-222 contribute to the CTP site; these read DIE and KTKPTQ. UTP-binding positions include 186–191 and Lys-222; that span reads KTKPTQ. The Glutamine amidotransferase type-1 domain occupies 290–532; it reads EIAIVGKYVK…VKAAKEYKQE (243 aa). Position 351 (Gly-351) interacts with L-glutamine. Cys-378 functions as the Nucleophile; for glutamine hydrolysis in the catalytic mechanism. L-glutamine-binding positions include 379–382, Glu-402, and Arg-459; that span reads FGFQ. Active-site residues include His-505 and Glu-507.

The protein belongs to the CTP synthase family. As to quaternary structure, homotetramer.

It catalyses the reaction UTP + L-glutamine + ATP + H2O = CTP + L-glutamate + ADP + phosphate + 2 H(+). The enzyme catalyses L-glutamine + H2O = L-glutamate + NH4(+). It carries out the reaction UTP + NH4(+) + ATP = CTP + ADP + phosphate + 2 H(+). Its pathway is pyrimidine metabolism; CTP biosynthesis via de novo pathway; CTP from UDP: step 2/2. With respect to regulation, allosterically activated by GTP, when glutamine is the substrate; GTP has no effect on the reaction when ammonia is the substrate. The allosteric effector GTP functions by stabilizing the protein conformation that binds the tetrahedral intermediate(s) formed during glutamine hydrolysis. Inhibited by the product CTP, via allosteric rather than competitive inhibition. Functionally, catalyzes the ATP-dependent amination of UTP to CTP with either L-glutamine or ammonia as the source of nitrogen. Regulates intracellular CTP levels through interactions with the four ribonucleotide triphosphates. The chain is CTP synthase from Pyrococcus abyssi (strain GE5 / Orsay).